We begin with the raw amino-acid sequence, 500 residues long: GTPase Der (500 aa).

EngA-type G domains lie at 3 to 166 (PVVA…MEEL) and 211 to 384 (IKLA…VSAT). GTP-binding positions include 9–16 (GRPNVGKS), 56–60 (DTGGI), 118–121 (NKID), 217–224 (GRPNVGKS), 264–268 (DTAGV), and 329–332 (NKWD). Residues 385 to 469 (KRVGTSVLTR…PIRIQFQNSE (85 aa)) enclose the KH-like domain. Residues 481 to 500 (LSQERQRKRLVGAVKNRNKK) form a disordered region. Basic residues predominate over residues 486–500 (QRKRLVGAVKNRNKK).

This sequence belongs to the TRAFAC class TrmE-Era-EngA-EngB-Septin-like GTPase superfamily. EngA (Der) GTPase family. In terms of assembly, associates with the 50S ribosomal subunit.

Functionally, GTPase that plays an essential role in the late steps of ribosome biogenesis. The sequence is that of GTPase Der from Aliivibrio salmonicida (strain LFI1238) (Vibrio salmonicida (strain LFI1238)).